Here is a 72-residue protein sequence, read N- to C-terminus: Translation initiation factor IF-1 (72 aa).

The S1-like domain maps to M1–R72.

Belongs to the IF-1 family. Component of the 30S ribosomal translation pre-initiation complex which assembles on the 30S ribosome in the order IF-2 and IF-3, IF-1 and N-formylmethionyl-tRNA(fMet); mRNA recruitment can occur at any time during PIC assembly.

It localises to the cytoplasm. Its function is as follows. One of the essential components for the initiation of protein synthesis. Stabilizes the binding of IF-2 and IF-3 on the 30S subunit to which N-formylmethionyl-tRNA(fMet) subsequently binds. Helps modulate mRNA selection, yielding the 30S pre-initiation complex (PIC). Upon addition of the 50S ribosomal subunit IF-1, IF-2 and IF-3 are released leaving the mature 70S translation initiation complex. The chain is Translation initiation factor IF-1 from Neisseria gonorrhoeae (strain ATCC 700825 / FA 1090).